Here is a 379-residue protein sequence, read N- to C-terminus: Queuine tRNA-ribosyltransferase (379 aa).

The active-site Proton acceptor is the D94. Residues 94–98, D148, Q191, and G218 contribute to the substrate site; that span reads DSGGF. Residues 249 to 255 are RNA binding; sequence GVGSPDS. D268 serves as the catalytic Nucleophile. The RNA binding; important for wobble base 34 recognition stretch occupies residues 273–277; that stretch reads TRIAR. Zn(2+)-binding residues include C306, C308, C311, and H337.

This sequence belongs to the queuine tRNA-ribosyltransferase family. As to quaternary structure, homodimer. Within each dimer, one monomer is responsible for RNA recognition and catalysis, while the other monomer binds to the replacement base PreQ1. Zn(2+) is required as a cofactor.

The enzyme catalyses 7-aminomethyl-7-carbaguanine + guanosine(34) in tRNA = 7-aminomethyl-7-carbaguanosine(34) in tRNA + guanine. It functions in the pathway tRNA modification; tRNA-queuosine biosynthesis. Its function is as follows. Catalyzes the base-exchange of a guanine (G) residue with the queuine precursor 7-aminomethyl-7-deazaguanine (PreQ1) at position 34 (anticodon wobble position) in tRNAs with GU(N) anticodons (tRNA-Asp, -Asn, -His and -Tyr). Catalysis occurs through a double-displacement mechanism. The nucleophile active site attacks the C1' of nucleotide 34 to detach the guanine base from the RNA, forming a covalent enzyme-RNA intermediate. The proton acceptor active site deprotonates the incoming PreQ1, allowing a nucleophilic attack on the C1' of the ribose to form the product. After dissociation, two additional enzymatic reactions on the tRNA convert PreQ1 to queuine (Q), resulting in the hypermodified nucleoside queuosine (7-(((4,5-cis-dihydroxy-2-cyclopenten-1-yl)amino)methyl)-7-deazaguanosine). The chain is Queuine tRNA-ribosyltransferase from Bacillus cytotoxicus (strain DSM 22905 / CIP 110041 / 391-98 / NVH 391-98).